Consider the following 145-residue polypeptide: MNASNPCRRFPRSARVRTRAQYTVVFDNARRTSDPLLSLHWRTGDTPPRLGMAVSRKVDTRAVGRNRIKRVLRDAMRHLLPELAGGDYVIVARSAAAKATNPQIRDAFLRLLRRAGALPLPAAPGTMPPARTMHPSSLSPTEPDL.

A compositionally biased stretch (low complexity) spans 120 to 130 (LPAAPGTMPPA). Residues 120–145 (LPAAPGTMPPARTMHPSSLSPTEPDL) form a disordered region. Over residues 134-145 (HPSSLSPTEPDL) the composition is skewed to polar residues.

Belongs to the RnpA family. In terms of assembly, consists of a catalytic RNA component (M1 or rnpB) and a protein subunit.

It catalyses the reaction Endonucleolytic cleavage of RNA, removing 5'-extranucleotides from tRNA precursor.. Functionally, RNaseP catalyzes the removal of the 5'-leader sequence from pre-tRNA to produce the mature 5'-terminus. It can also cleave other RNA substrates such as 4.5S RNA. The protein component plays an auxiliary but essential role in vivo by binding to the 5'-leader sequence and broadening the substrate specificity of the ribozyme. In Xanthomonas oryzae pv. oryzae (strain MAFF 311018), this protein is Ribonuclease P protein component.